Here is a 566-residue protein sequence, read N- to C-terminus: Mucin-21 (566 aa).

The signal sequence occupies residues 1–24 (MKMQKGNVLLMFGLLLHLEAATNS). A glycan (N-linked (GlcNAc...) asparagine) is linked at Asn25. The tract at residues 25–68 (NETSTSANTGSSVISSGASTATNSGSSVTSSGVSTATISGSSVT) is disordered. Residues 25–479 (NETSTSANTG…KPGGSLVPWE (455 aa)) lie on the Extracellular side of the membrane. 28 repeat units span residues 31–44 (ANTG…GAST), 45–59 (ATNS…GVST), 60–74 (ATIS…GVSI), 75–89 (VTNS…GIST), 90–104 (ATNS…GISI), 105–119 (ATNS…GAST), 120–134 (ATNS…GAST), 135–149 (ATNS…GAST), 150–164 (ATNS…EAST), 165–179 (ATNS…GAST), 180–194 (ATNS…RAST), 195–209 (ATNS…GAST), 210–224 (ATNS…GAGT), 225–239 (ATNS…GAST), 244–254 (ESSTPSSGAGT), 255–269 (ATNS…GAGT), 270–284 (ATNS…GIST), 285–299 (VTNS…GANT), 300–314 (ATNS…GANT), 315–329 (ATNS…GAST), 330–344 (ATNS…GAST), 345–359 (ATNS…GAST), 360–374 (ATNS…GTST), 375–389 (ATNS…GAST), 390–404 (ATTS…GAST), 405–419 (ATNS…GAST), 420–434 (ATNS…GANT), and 435–449 (ATNS…GSGT). The interval 31–435 (ANTGSSVISS…STTSSGANTA (405 aa)) is 28 X 15 AA approximate tandem repeats. The interval 106 to 456 (TNSESSTTSS…SGTAALTGMH (351 aa)) is disordered. The chain crosses the membrane as a helical span at residues 480 to 500 (IFLITLVSVVAAVGLFAGLFF). Over 501-566 (CVRNSLSLRN…MEMSGRNSGP (66 aa)) the chain is Cytoplasmic. The tract at residues 521-566 (GLNHGLGPGPGGNHGAPHRPRWSPNWFWRRPVSSIAMEMSGRNSGP) is cytoplasmic tail.

In terms of processing, O-glycosylated. Expressed in lung, large intestine, thymus, and testis. Expressed in normal and malignant bronchial epithelial cells.

The protein resides in the cell membrane. In Homo sapiens (Human), this protein is Mucin-21 (MUC21).